The following is a 166-amino-acid chain: Phospholipase A2 inhibitor A4/A5 (166 aa).

An N-terminal signal peptide occupies residues 1–19 (MRLILLSGLLLLGTFLVNG). The C-type lectin domain occupies 46-161 (LFHAFLTVHK…CDDNLLVVCE (116 aa)). Disulfide bonds link C83–C160 and C138–C152. N-linked (GlcNAc...) asparagine glycosylation is present at N122.

The protein belongs to the alpha-type phospholipase A2 inhibitor family. Homotrimer; non-covalently linked. As to expression, expressed by the liver.

Its subcellular location is the secreted. Its function is as follows. This phospholipase A2 inhibitor binds directly phospholipase A2 in the presence or absence of calcium. The protein is Phospholipase A2 inhibitor A4/A5 of Crotalus durissus terrificus (South American rattlesnake).